Here is a 285-residue protein sequence, read N- to C-terminus: ATP synthase gamma chain (285 aa).

This sequence belongs to the ATPase gamma chain family. As to quaternary structure, F-type ATPases have 2 components, CF(1) - the catalytic core - and CF(0) - the membrane proton channel. CF(1) has five subunits: alpha(3), beta(3), gamma(1), delta(1), epsilon(1). CF(0) has three main subunits: a, b and c.

It localises to the cell inner membrane. Its function is as follows. Produces ATP from ADP in the presence of a proton gradient across the membrane. The gamma chain is believed to be important in regulating ATPase activity and the flow of protons through the CF(0) complex. This is ATP synthase gamma chain from Protochlamydia amoebophila (strain UWE25).